Reading from the N-terminus, the 141-residue chain is Nucleoside diphosphate kinase (141 aa).

Positions 11, 59, 87, 93, 104, and 114 each coordinate ATP. H117 acts as the Pros-phosphohistidine intermediate in catalysis.

It belongs to the NDK family. In terms of assembly, homotetramer. Mg(2+) serves as cofactor.

The protein resides in the cytoplasm. The catalysed reaction is a 2'-deoxyribonucleoside 5'-diphosphate + ATP = a 2'-deoxyribonucleoside 5'-triphosphate + ADP. It catalyses the reaction a ribonucleoside 5'-diphosphate + ATP = a ribonucleoside 5'-triphosphate + ADP. Major role in the synthesis of nucleoside triphosphates other than ATP. The ATP gamma phosphate is transferred to the NDP beta phosphate via a ping-pong mechanism, using a phosphorylated active-site intermediate. In Laribacter hongkongensis (strain HLHK9), this protein is Nucleoside diphosphate kinase.